The sequence spans 494 residues: Voltage-gated potassium channel regulatory subunit KCNF1 (494 aa).

The Cytoplasmic portion of the chain corresponds to 1 to 183 (MDGSGERSLP…KPESSCPARV (183 aa)). Residues 184–204 (VAVLSFLLILVSSVVMCMGTI) form a helical membrane-spanning segment. Residues 224–244 (NVETACIGWFTLEYLLRLFSS) form a helical membrane-spanning segment. At 245-249 (PNKLH) the chain is on the cytoplasmic side. The chain crosses the membrane as a helical span at residues 250–270 (FALSFMNIVDVLAILPFYVSL). Residues 290–310 (QALRIMRIARIFKLARHSSGL) traverse the membrane as a helical; Voltage-sensor segment. Topologically, residues 311-324 (QTLTYALKRSFKEL) are cytoplasmic. A helical transmembrane segment spans residues 325-345 (GLLLMYLAVGIFVFSALGYTM). The pore-forming intramembrane region spans 358–378 (PQSFWWAIITMTTVGYGDIYP). Positions 370–375 (TVGYGD) match the Selectivity filter motif. Residues 386-406 (NAAISFLCGVIAIALPIHPII) traverse the membrane as a helical segment. The Cytoplasmic portion of the chain corresponds to 407–494 (NNFVRYYNKQ…HHRTRLQSCK (88 aa)). Positions 433 to 469 (NSSSGGEGKTGGSRSDLDNLPPEPAGKEAPSCSSRLK) are disordered.

Belongs to the potassium channel family. F (TC 1.A.1.2) subfamily. Kv5.1/KCNF1 sub-subfamily. As to quaternary structure, heterotetramer with KCNB1 or KCNB2. As to expression, detected in heart, brain, liver, skeletal muscle, kidney and pancreas.

Its subcellular location is the cell membrane. In terms of biological role, regulatory alpha-subunit of the voltage-gated potassium (Kv) channel which, when coassembled with KCNB1 or KCNB2, can modulate their expression and their gating kinetics by acting on deactivation upon repolarization and inactivation during maintained depolarization. Accelerates inactivation but has relatively little effect on deactivation. Coexpression with KCNB1 or KCNB2 markedly slows inactivation. Each modulatory subunit has its own specific properties of regulation, and can lead to extensive inhibitions, to large changes in kinetics, and/or to large shifts in the voltage dependencies of the inactivation process. The gating kinetics depends on the nature and stoichiometry of the associated regulatory sunbunit. Fails to produce a potassium current when expressed alone. The polypeptide is Voltage-gated potassium channel regulatory subunit KCNF1 (Homo sapiens (Human)).